The sequence spans 428 residues: Serine--tRNA ligase (428 aa).

231–233 contacts L-serine; it reads TAE. Residue 262-264 participates in ATP binding; it reads RSE. E285 is a binding site for L-serine. Residue 349–352 coordinates ATP; it reads EISS. Position 385 (S385) interacts with L-serine.

This sequence belongs to the class-II aminoacyl-tRNA synthetase family. Type-1 seryl-tRNA synthetase subfamily. Homodimer. The tRNA molecule binds across the dimer.

The protein localises to the cytoplasm. It carries out the reaction tRNA(Ser) + L-serine + ATP = L-seryl-tRNA(Ser) + AMP + diphosphate + H(+). The enzyme catalyses tRNA(Sec) + L-serine + ATP = L-seryl-tRNA(Sec) + AMP + diphosphate + H(+). It functions in the pathway aminoacyl-tRNA biosynthesis; selenocysteinyl-tRNA(Sec) biosynthesis; L-seryl-tRNA(Sec) from L-serine and tRNA(Sec): step 1/1. Functionally, catalyzes the attachment of serine to tRNA(Ser). Is also able to aminoacylate tRNA(Sec) with serine, to form the misacylated tRNA L-seryl-tRNA(Sec), which will be further converted into selenocysteinyl-tRNA(Sec). The chain is Serine--tRNA ligase from Staphylococcus aureus (strain MSSA476).